Reading from the N-terminus, the 239-residue chain is Putative zinc finger protein 132L (239 aa).

The tract at residues 20–40 (DASLSTKSPKREPSQEKEIKK) is disordered. The span at 28–40 (PKREPSQEKEIKK) shows a compositional bias: basic and acidic residues. 2 consecutive C3H1-type zinc fingers follow at residues 44–68 (IKKN…HPGE) and 81–106 (RRKT…HDES). Residues 128 to 151 (PGECKFSHPPPPPPSPPSPPPKEE) are disordered. Residues 135–147 (HPPPPPPSPPSPP) show a composition bias toward pro residues.

The protein is Putative zinc finger protein 132L of Acheta domesticus (House cricket).